We begin with the raw amino-acid sequence, 184 residues long: Probable RNA 2'-phosphotransferase (184 aa).

It belongs to the KptA/TPT1 family.

Its function is as follows. Removes the 2'-phosphate from RNA via an intermediate in which the phosphate is ADP-ribosylated by NAD followed by a presumed transesterification to release the RNA and generate ADP-ribose 1''-2''-cyclic phosphate (APPR&gt;P). May function as an ADP-ribosylase. The chain is Probable RNA 2'-phosphotransferase from Escherichia coli (strain K12 / MC4100 / BW2952).